Here is a 316-residue protein sequence, read N- to C-terminus: Phosphate acyltransferase (316 aa).

Belongs to the PlsX family. As to quaternary structure, homodimer. Probably interacts with PlsY.

It localises to the cytoplasm. The enzyme catalyses a fatty acyl-[ACP] + phosphate = an acyl phosphate + holo-[ACP]. Its pathway is lipid metabolism; phospholipid metabolism. Catalyzes the reversible formation of acyl-phosphate (acyl-PO(4)) from acyl-[acyl-carrier-protein] (acyl-ACP). This enzyme utilizes acyl-ACP as fatty acyl donor, but not acyl-CoA. This chain is Phosphate acyltransferase, found in Chlamydia felis (strain Fe/C-56) (Chlamydophila felis).